The chain runs to 270 residues: Small ribosomal subunit protein uS2 (270 aa).

The span at 207–225 (EEPENTEEAAEEAATEEVV) shows a compositional bias: acidic residues. The segment at 207 to 270 (EEPENTEEAA…SESAPAPVAA (64 aa)) is disordered. Positions 226–258 (ETAAAEAAAATNADNWDVAPDAGAGAADWAATD) are enriched in low complexity.

It belongs to the universal ribosomal protein uS2 family. In terms of assembly, component of the small ribosomal subunit. Mature ribosomes consist of a small (40S) and a large (60S) subunit. The 40S subunit contains about 33 different proteins and 1 molecule of RNA (18S). The 60S subunit contains about 49 different proteins and 3 molecules of RNA (25S, 5.8S and 5S). Interacts with RPS21.

The protein localises to the cytoplasm. In terms of biological role, required for the assembly and/or stability of the 40S ribosomal subunit. Required for the processing of the 20S rRNA-precursor to mature 18S rRNA in a late step of the maturation of 40S ribosomal subunits. The protein is Small ribosomal subunit protein uS2 of Yarrowia lipolytica (strain CLIB 122 / E 150) (Yeast).